Consider the following 248-residue polypeptide: ATP synthase subunit a, chloroplastic (248 aa).

4 consecutive transmembrane segments (helical) span residues 96 to 116 (VPFI…GALL), 135 to 155 (INTT…AGLY), 200 to 220 (LVVA…MMLL), and 221 to 241 (GLFT…AYIG).

This sequence belongs to the ATPase A chain family. In terms of assembly, F-type ATPases have 2 components, CF(1) - the catalytic core - and CF(0) - the membrane proton channel. CF(1) has five subunits: alpha(3), beta(3), gamma(1), delta(1), epsilon(1). CF(0) has four main subunits: a, b, b' and c.

The protein localises to the plastid. It is found in the chloroplast thylakoid membrane. Key component of the proton channel; it plays a direct role in the translocation of protons across the membrane. The chain is ATP synthase subunit a, chloroplastic from Adiantum capillus-veneris (Maidenhair fern).